The chain runs to 332 residues: Biotin synthase (332 aa).

The Radical SAM core domain occupies 52–282; it reads FPENEVEFCS…KAELRLCGGR (231 aa). C70, C74, and C77 together coordinate [4Fe-4S] cluster. C114, C147, C207, and R277 together coordinate [2Fe-2S] cluster.

It belongs to the radical SAM superfamily. Biotin synthase family. Homodimer. Requires [4Fe-4S] cluster as cofactor. [2Fe-2S] cluster serves as cofactor.

It catalyses the reaction (4R,5S)-dethiobiotin + (sulfur carrier)-SH + 2 reduced [2Fe-2S]-[ferredoxin] + 2 S-adenosyl-L-methionine = (sulfur carrier)-H + biotin + 2 5'-deoxyadenosine + 2 L-methionine + 2 oxidized [2Fe-2S]-[ferredoxin]. It functions in the pathway cofactor biosynthesis; biotin biosynthesis; biotin from 7,8-diaminononanoate: step 2/2. In terms of biological role, catalyzes the conversion of dethiobiotin (DTB) to biotin by the insertion of a sulfur atom into dethiobiotin via a radical-based mechanism. The polypeptide is Biotin synthase (Aquifex aeolicus (strain VF5)).